A 600-amino-acid chain; its full sequence is MTELSRIRNFSIIAHIDHGKSTLADRFIQICGGLTDREMAEQVLDSMDLERERGITIKAQSVTLNYKAKDGETYKLNFIDTPGHVDFSYEVSRSLYACEGALLVVDAGQGVEAQSVANCYTAIEQGLEVVPVLNKMDLPQAEPERVAAEIEDIIGIDASDAVRCSAKSGLGVEDVLEDLIKKIPPPKGDRSAPLQALIIDSWFDNYLGVVSLVRVTEGVLRKGDKIVIKSTKKAWNADKVGVFNPKPTDTDVLEAGDVGFVVAGIKDIHGAPVGDTIVHQKFAEETPMLPGFKKVKPQVYAGLFPVSADDYDDFRDALEKLTLNDASLFFEPENSDALGFGFRCGFLGMLHMEIIQERLEREYDLDLITTAPTVIYEVVTKQGETLSVDNPSRLPDIGSIEEMREPIVEANILVPQEHLGNVIALCEEKRGVQKNMHFMSTQVQLTYELPMAEVVMDFFDRIKSASRGFASLDYHFVRFQSANLVRLDVLINGDRVDALALIVHRDLSHRKGRQLIEKMKELIPRQMFDIAIQAAIGTQVVSRVTVKALRKNVTAKCYGGDVSRKKKLLQKQKEGKKRMKQLGNVEVPQEAFLAVLKVDN.

Positions S5–K187 constitute a tr-type G domain. Residues D17–T22 and N134–D137 each bind GTP.

This sequence belongs to the TRAFAC class translation factor GTPase superfamily. Classic translation factor GTPase family. LepA subfamily.

The protein localises to the cell inner membrane. The enzyme catalyses GTP + H2O = GDP + phosphate + H(+). Required for accurate and efficient protein synthesis under certain stress conditions. May act as a fidelity factor of the translation reaction, by catalyzing a one-codon backward translocation of tRNAs on improperly translocated ribosomes. Back-translocation proceeds from a post-translocation (POST) complex to a pre-translocation (PRE) complex, thus giving elongation factor G a second chance to translocate the tRNAs correctly. Binds to ribosomes in a GTP-dependent manner. The protein is Elongation factor 4 of Marinobacter nauticus (strain ATCC 700491 / DSM 11845 / VT8) (Marinobacter aquaeolei).